Consider the following 483-residue polypeptide: UDP-N-acetylmuramate--L-alanine ligase (483 aa).

112–118 (GTHGKTT) contacts ATP.

The protein belongs to the MurCDEF family.

It is found in the cytoplasm. The enzyme catalyses UDP-N-acetyl-alpha-D-muramate + L-alanine + ATP = UDP-N-acetyl-alpha-D-muramoyl-L-alanine + ADP + phosphate + H(+). Its pathway is cell wall biogenesis; peptidoglycan biosynthesis. In terms of biological role, cell wall formation. The protein is UDP-N-acetylmuramate--L-alanine ligase of Ralstonia pickettii (strain 12J).